The following is a 156-amino-acid chain: MSRRSTPKKRIIDSDPIYRSRLVTMLISHILKEGKKSLAQKIFYQAMKNIEEKTEKDPLKVLQQAVLNATPLVEVKARRLGGSTYQVPREVKAERGTALALRWLLSSARQRPGRNMVAKLTNEIVDAANETGNAIRKREETHRMAEANKAFSHYRF.

Belongs to the universal ribosomal protein uS7 family. As to quaternary structure, part of the 30S ribosomal subunit.

It is found in the plastid. The protein resides in the chloroplast. Functionally, one of the primary rRNA binding proteins, it binds directly to 16S rRNA where it nucleates assembly of the head domain of the 30S subunit. This chain is Small ribosomal subunit protein uS7c (rps7), found in Mesostigma viride (Green alga).